Reading from the N-terminus, the 421-residue chain is DUF724 domain-containing protein 8 (421 aa).

2 stretches are compositionally biased toward polar residues: residues 149-165 and 199-213; these read TQGSGDKTGDSVRNANE and PRNQNGSGNDSTLEN. A disordered region spans residues 149–229; it reads TQGSGDKTGD…NRKRKREENL (81 aa). Residues 246–420 form the DUF724 domain; sequence VLPFEKKLRI…LEFLATASAP (175 aa). Residues 361-397 are a coiled coil; it reads EKVTAEKESVKAENKRKILELQRLNEEMDKEIAQSKS.

As to expression, expressed in leaves and flowers, and at lower levels in roots, stems and siliques.

Its subcellular location is the nucleus. In terms of biological role, may be involved in the polar growth of plant cells via transportation of RNAs. The chain is DUF724 domain-containing protein 8 from Arabidopsis thaliana (Mouse-ear cress).